A 311-amino-acid polypeptide reads, in one-letter code: Methionyl-tRNA formyltransferase (311 aa).

Residue 109-112 (SLLP) participates in (6S)-5,6,7,8-tetrahydrofolate binding.

Belongs to the Fmt family.

It catalyses the reaction L-methionyl-tRNA(fMet) + (6R)-10-formyltetrahydrofolate = N-formyl-L-methionyl-tRNA(fMet) + (6S)-5,6,7,8-tetrahydrofolate + H(+). Attaches a formyl group to the free amino group of methionyl-tRNA(fMet). The formyl group appears to play a dual role in the initiator identity of N-formylmethionyl-tRNA by promoting its recognition by IF2 and preventing the misappropriation of this tRNA by the elongation apparatus. In Marinobacter nauticus (strain ATCC 700491 / DSM 11845 / VT8) (Marinobacter aquaeolei), this protein is Methionyl-tRNA formyltransferase.